The primary structure comprises 425 residues: Elongation factor 1-alpha (425 aa).

One can recognise a tr-type G domain in the interval 5 to 221; the sequence is KPHINLAVIG…DELEVPDKPT (217 aa). The segment at 14 to 21 is G1; that stretch reads GHIDHGKS. 14–21 is a GTP binding site; sequence GHIDHGKS. S21 contributes to the Mg(2+) binding site. Residues 70 to 74 form a G2 region; it reads GITID. Residues 91–94 are G3; that stretch reads DCPG. Residues 91 to 95 and 146 to 149 each bind GTP; these read DCPGH and NKMD. The segment at 146-149 is G4; it reads NKMD. Positions 185 to 187 are G5; sequence SAF.

The protein belongs to the TRAFAC class translation factor GTPase superfamily. Classic translation factor GTPase family. EF-Tu/EF-1A subfamily.

The protein resides in the cytoplasm. The enzyme catalyses GTP + H2O = GDP + phosphate + H(+). Its function is as follows. GTP hydrolase that promotes the GTP-dependent binding of aminoacyl-tRNA to the A-site of ribosomes during protein biosynthesis. The sequence is that of Elongation factor 1-alpha from Methanospirillum hungatei JF-1 (strain ATCC 27890 / DSM 864 / NBRC 100397 / JF-1).